The chain runs to 103 residues: Secreted LysM effector Mgx1LysM (103 aa).

A signal peptide spans 1-18 (MKVTTIIAALLSVAVVDA). 2 cysteine pairs are disulfide-bonded: Cys-31/Cys-89 and Cys-62/Cys-97. The LysM domain occupies 37 to 85 (IPYVVKKGDTLTHIAHDIYKRKVGICDLAYTNHIGYNPDLIYEDQTLLI). Residues Gly-44, Thr-48, Asp-75, and Ile-77 each contribute to the chitin site.

It belongs to the secreted LysM effector family. Forms homodimers in a chitin-independent manner through interactions at the N-termini of Mgx1LysM monomers. Homodimers are further polymerized in a chitin-dependent manner.

The protein localises to the secreted. The protein resides in the cell wall. Its function is as follows. Secreted effector that enables the plant pathogenic fungus to manipulate host defenses for successful infection. Binds chitin and suppresses the chitin-induced reactive oxygen species (ROS) burst. Chitin-induced polymerization of homodimers forms a contiguous Mg1LysM highly oligomeric super-complexe that is anchored to the chitin in the fungal cell wall to prevent hydrolysis by host chitinases. The sequence is that of Secreted LysM effector Mgx1LysM from Zymoseptoria tritici (strain CBS 115943 / IPO323) (Speckled leaf blotch fungus).